The following is a 486-amino-acid chain: Bifunctional protein HldE (486 aa).

Residues 1-331 (MSTNVADLLH…NALTAESVPV (331 aa)) are ribokinase. 207 to 210 (NLGE) is an ATP binding site. The active site involves Asp276. The tract at residues 358-486 (VTNGCFDLLH…STTKLIEKGH (129 aa)) is cytidylyltransferase.

It in the N-terminal section; belongs to the carbohydrate kinase PfkB family. The protein in the C-terminal section; belongs to the cytidylyltransferase family. Homodimer.

The enzyme catalyses D-glycero-beta-D-manno-heptose 7-phosphate + ATP = D-glycero-beta-D-manno-heptose 1,7-bisphosphate + ADP + H(+). The catalysed reaction is D-glycero-beta-D-manno-heptose 1-phosphate + ATP + H(+) = ADP-D-glycero-beta-D-manno-heptose + diphosphate. It functions in the pathway nucleotide-sugar biosynthesis; ADP-L-glycero-beta-D-manno-heptose biosynthesis; ADP-L-glycero-beta-D-manno-heptose from D-glycero-beta-D-manno-heptose 7-phosphate: step 1/4. Its pathway is nucleotide-sugar biosynthesis; ADP-L-glycero-beta-D-manno-heptose biosynthesis; ADP-L-glycero-beta-D-manno-heptose from D-glycero-beta-D-manno-heptose 7-phosphate: step 3/4. Functionally, catalyzes the phosphorylation of D-glycero-D-manno-heptose 7-phosphate at the C-1 position to selectively form D-glycero-beta-D-manno-heptose-1,7-bisphosphate. Its function is as follows. Catalyzes the ADP transfer from ATP to D-glycero-beta-D-manno-heptose 1-phosphate, yielding ADP-D-glycero-beta-D-manno-heptose. This Koribacter versatilis (strain Ellin345) protein is Bifunctional protein HldE.